The sequence spans 832 residues: Armadillo segment polarity protein (832 aa).

Residues 1 to 20 (MSYQMPQNRTMSHNPYNSSD) show a composition bias toward polar residues. The segment at 1-24 (MSYQMPQNRTMSHNPYNSSDMPMP) is disordered. ARM repeat units lie at residues 146–185 (NYQD…QLSK), 188–228 (ASRH…NLSH), 230–269 (RQGL…NLLL), 272–311 (DGSK…ILAY), 356–395 (SSNK…NLSD), 397–434 (ATKV…NLTC), 483–524 (SESA…NLAL), 594–634 (ELNR…ELAV), and 636–675 (KEVA…KMSE). Residues 721–832 (AYEGLYGQGP…QVAAWYDTDL (112 aa)) form a disordered region. A compositionally biased stretch (low complexity) spans 767-777 (PAGSNPNAGNN).

Belongs to the beta-catenin family.

The protein localises to the cytoplasm. It is found in the cell membrane. It localises to the cell junction. The protein resides in the adherens junction. Functionally, may associate with CadN and participate in the transmission of developmental information. Can associate with alpha-catenin. Accumulates through wg signaling; arm function in wg signal transduction is required early in development for determination of neuroblast fate. Arm and Abl proteins function cooperatively at adherens junctions in both the CNS and epidermis. This chain is Armadillo segment polarity protein, found in Aedes aegypti (Yellowfever mosquito).